The following is a 92-amino-acid chain: RNA-binding protein Hfq (92 aa).

The 60-residue stretch at 9-68 folds into the Sm domain; that stretch reads DPFLNALRRERVPVSIYLVNGIKLQGQVESFDQFVILLKNTVSQMVYKHAISTVVPARPF. The interval 68-92 is disordered; it reads FNVSSHHNTPNQAAGYNASHDDSAE. The segment covering 69–81 has biased composition (polar residues); the sequence is NVSSHHNTPNQAA.

It belongs to the Hfq family. Homohexamer.

Functionally, RNA chaperone that binds small regulatory RNA (sRNAs) and mRNAs to facilitate mRNA translational regulation in response to envelope stress, environmental stress and changes in metabolite concentrations. Also binds with high specificity to tRNAs. The sequence is that of RNA-binding protein Hfq from Shewanella loihica (strain ATCC BAA-1088 / PV-4).